The sequence spans 340 residues: Serine/threonine-protein kinase PDIK1L (340 aa).

One can recognise a Protein kinase domain in the interval 8-333; sequence YDLIREVGRG…LELRLVQIAF (326 aa). Residues 14–22 and Lys37 each bind ATP; that span reads VGRGSYGVV. Asp164 (proton acceptor) is an active-site residue.

This sequence belongs to the protein kinase superfamily. Ser/Thr protein kinase family.

It localises to the nucleus. It catalyses the reaction L-seryl-[protein] + ATP = O-phospho-L-seryl-[protein] + ADP + H(+). The catalysed reaction is L-threonyl-[protein] + ATP = O-phospho-L-threonyl-[protein] + ADP + H(+). This is Serine/threonine-protein kinase PDIK1L (PDIK1L) from Pongo abelii (Sumatran orangutan).